The chain runs to 248 residues: UPF0273 protein APE_1505.1 (248 aa).

The KaiC domain occupies 3–247 (DRVKTGIPGM…VVRIGRRVSI (245 aa)). 30–37 (GGPGTGKS) contacts ATP.

The protein belongs to the UPF0273 family.

This is UPF0273 protein APE_1505.1 from Aeropyrum pernix (strain ATCC 700893 / DSM 11879 / JCM 9820 / NBRC 100138 / K1).